The chain runs to 612 residues: MFRCGGLAGAFKQKLVPLVRSVCVQRPKQRNRLPGNLFQQWRVPLELQMARQMASSGPSGGKMDNSVLVLIVGLSTIGAGAYAYKTIKEDQKRYNERIMGLGLSPEEKQRRAIASAAEGGSVPPIRVPSHVPFLLIGGGTAAFAAARSIRARDPGARVLIVSEDPELPYMRPPLSKELWFSDDPNVTKTLQFRQWNGKERSIYFQPPSFYVSAQDLPHIENGGVAVLTGKKVVHLDVRGNMVKLNDGSQITFEKCLIATGGTPRSLSAIDRAGAEVKSRTTLFRKIGDFRALEKISREVKSITVIGGGFLGSELACALGRKSQASGIEVIQLFPEKGNMGKILPEYLSNWTMEKVKREGVKVMPNAIVQSVGVSGGKLLIKLKDGRKVETDHIVTAVGLEPNVELAKTGGLEIDSDFGGFRVNAELQARSNIWVAGDAACFYDIKLGRRRVEHHDHAVVSGRLAGENMTGAAKPYWHQSMFWSDLGPDVGYEAIGLVDSSLPTVGVFAKATAQDNPKSATEQSGTGIRSESETESEASEITIPPSDPAVPQVPVEGEDYGKGVIFYLRDKVVVGIVLWNVFNRMPIARKIIKDGEQHEDLNEVAKLFNIHED.

2 consecutive short sequence motifs (mitochondrial localization signal) follow at residues 1–30 (MFRCGGLAGAFKQKLVPLVRSVCVQRPKQR) and 62–88 (KMDNSVLVLIVGLSTIGAGAYAYKTIK). The transit peptide at 1–53 (MFRCGGLAGAFKQKLVPLVRSVCVQRPKQRNRLPGNLFQQWRVPLELQMARQM) directs the protein to the mitochondrion. 2 propeptides (removed in mature form) span residues 54 to 100 (ASSG…RIMG) and 55 to 101 (SSGP…IMGL). Position 108 is an N6-succinyllysine (Lys108). Ser115 is subject to Phosphoserine. Residues 133–482 (FLLIGGGTAA…KPYWHQSMFW (350 aa)) are FAD-dependent oxidoreductase. Residues 137–141 (GGGTA), 163–164 (ED), Arg171, and Lys176 each bind FAD. An NAD(+)-binding site is contributed by Trp195. Residue Val232 participates in FAD binding. Residue Lys254 forms a Glycyl lysine isopeptide (Lys-Gly) (interchain with G-Cter in ubiquitin) linkage. A Phosphoserine modification is found at Ser267. Arg284 contacts FAD. Residues 307 to 310 (GGFL), Glu335, and Lys341 each bind NAD(+). Phosphoserine is present on Ser370. Residue Lys387 is modified to N6-acetyllysine. Gly398 contacts NAD(+). Asp437 serves as a coordination point for FAD. Residues 445–450 (KLGRRR) carry the Nuclear localization signal motif. NAD(+)-binding positions include 452–453 (EH), Trp482, and Glu492. Residues 453 to 454 (HH) and Trp482 each bind FAD. Polar residues predominate over residues 512–528 (AQDNPKSATEQSGTGIR). Positions 512–551 (AQDNPKSATEQSGTGIRSESETESEASEITIPPSDPAVPQ) are disordered. Thr520 carries the post-translational modification Phosphothreonine. Phosphoserine occurs at positions 523 and 529. Asn582 provides a ligand contact to NAD(+). Residue Lys592 is modified to N6-acetyllysine.

Belongs to the FAD-dependent oxidoreductase family. In terms of assembly, monomer (oxidized form). Homodimer (reduced form). Upon reduction with NADH, undergoes dimerization and forms tight, long-lived FADH2-NAD charge transfer complexes (CTC) resistant to oxidation. Also dimerizes with isoform 3 preventing its release from mitochondria. Interacts with XIAP/BIRC4. Interacts (via N-terminus) with EIF3G (via C-terminus). Interacts with PRELID1. Interacts with CHCHD4; the interaction increases in presence of NADH. Interacts with processed form of PARP1 (Poly [ADP-ribose] polymerase 1, processed C-terminus); interaction is mediated with poly-ADP-ribose chains attached to PARP1, promoting translocation into the nucleus. It depends on FAD as a cofactor. Under normal conditions, a 54-residue N-terminal segment is first proteolytically removed during or just after translocation into the mitochondrial intermembrane space (IMS) by the mitochondrial processing peptidase (MPP) to form the inner-membrane-anchored mature form (AIFmit). During apoptosis, it is further proteolytically processed at amino-acid position 101 leading to the generation of the mature form, which is confined to the mitochondrial IMS in a soluble form (AIFsol). AIFsol is released to the cytoplasm in response to specific death signals, and translocated to the nucleus, where it induces nuclear apoptosis in a caspase-independent manner. In terms of processing, ubiquitination by XIAP/BIRC4 does not lead to proteasomal degradation. Ubiquitination at Lys-254 by XIAP/BIRC4 blocks its ability to bind DNA and induce chromatin degradation, thereby inhibiting its ability to induce cell death.

The protein localises to the mitochondrion intermembrane space. Its subcellular location is the mitochondrion inner membrane. It localises to the cytoplasm. The protein resides in the nucleus. It is found in the perinuclear region. It carries out the reaction A + NADH + H(+) = AH2 + NAD(+). In terms of biological role, functions both as NADH oxidoreductase and as regulator of apoptosis. In response to apoptotic stimuli, it is released from the mitochondrion intermembrane space into the cytosol and to the nucleus, where it functions as a proapoptotic factor in a caspase-independent pathway. Release into the cytoplasm is mediated upon binding to poly-ADP-ribose chains. The soluble form (AIFsol) found in the nucleus induces 'parthanatos' i.e. caspase-independent fragmentation of chromosomal DNA. Binds to DNA in a sequence-independent manner. Interacts with EIF3G, and thereby inhibits the EIF3 machinery and protein synthesis, and activates caspase-7 to amplify apoptosis. Plays a critical role in caspase-independent, pyknotic cell death in hydrogen peroxide-exposed cells. In contrast, participates in normal mitochondrial metabolism. Plays an important role in the regulation of respiratory chain biogenesis by interacting with CHCHD4 and controlling CHCHD4 mitochondrial import. The protein is Apoptosis-inducing factor 1, mitochondrial (Aifm1) of Rattus norvegicus (Rat).